The chain runs to 107 residues: uncharacterized protein (107 aa).

Basic and acidic residues predominate over residues 88-97 (EEKKEKDKGK). The interval 88–107 (EEKKEKDKGKKGLLSRLKFW) is disordered. A compositionally biased stretch (basic residues) spans 98–107 (KGLLSRLKFW).

This is an uncharacterized protein from Methanocaldococcus jannaschii (strain ATCC 43067 / DSM 2661 / JAL-1 / JCM 10045 / NBRC 100440) (Methanococcus jannaschii).